Consider the following 111-residue polypeptide: Large ribosomal subunit protein uL22 (111 aa).

The protein belongs to the universal ribosomal protein uL22 family. In terms of assembly, part of the 50S ribosomal subunit.

Functionally, this protein binds specifically to 23S rRNA; its binding is stimulated by other ribosomal proteins, e.g. L4, L17, and L20. It is important during the early stages of 50S assembly. It makes multiple contacts with different domains of the 23S rRNA in the assembled 50S subunit and ribosome. Its function is as follows. The globular domain of the protein is located near the polypeptide exit tunnel on the outside of the subunit, while an extended beta-hairpin is found that lines the wall of the exit tunnel in the center of the 70S ribosome. The protein is Large ribosomal subunit protein uL22 of Pelobacter propionicus (strain DSM 2379 / NBRC 103807 / OttBd1).